A 112-amino-acid chain; its full sequence is Putative pterin-4-alpha-carbinolamine dehydratase (112 aa).

This sequence belongs to the pterin-4-alpha-carbinolamine dehydratase family.

It catalyses the reaction (4aS,6R)-4a-hydroxy-L-erythro-5,6,7,8-tetrahydrobiopterin = (6R)-L-erythro-6,7-dihydrobiopterin + H2O. The polypeptide is Putative pterin-4-alpha-carbinolamine dehydratase (Shewanella baltica (strain OS155 / ATCC BAA-1091)).